Consider the following 399-residue polypeptide: Dual-specificity RNA methyltransferase RlmN (399 aa).

The active-site Proton acceptor is the glutamate 120. A Radical SAM core domain is found at 126–367 (EEGRGTLCVS…SPVRTPRGRD (242 aa)). Cysteines 133 and 372 form a disulfide. Cysteine 140, cysteine 144, and cysteine 147 together coordinate [4Fe-4S] cluster. Residues 198-199 (GE), serine 230, 252-254 (SLH), and asparagine 329 each bind S-adenosyl-L-methionine. Cysteine 372 (S-methylcysteine intermediate) is an active-site residue.

It belongs to the radical SAM superfamily. RlmN family. The cofactor is [4Fe-4S] cluster.

It is found in the cytoplasm. It carries out the reaction adenosine(2503) in 23S rRNA + 2 reduced [2Fe-2S]-[ferredoxin] + 2 S-adenosyl-L-methionine = 2-methyladenosine(2503) in 23S rRNA + 5'-deoxyadenosine + L-methionine + 2 oxidized [2Fe-2S]-[ferredoxin] + S-adenosyl-L-homocysteine. The catalysed reaction is adenosine(37) in tRNA + 2 reduced [2Fe-2S]-[ferredoxin] + 2 S-adenosyl-L-methionine = 2-methyladenosine(37) in tRNA + 5'-deoxyadenosine + L-methionine + 2 oxidized [2Fe-2S]-[ferredoxin] + S-adenosyl-L-homocysteine. Functionally, specifically methylates position 2 of adenine 2503 in 23S rRNA and position 2 of adenine 37 in tRNAs. m2A2503 modification seems to play a crucial role in the proofreading step occurring at the peptidyl transferase center and thus would serve to optimize ribosomal fidelity. This Parvibaculum lavamentivorans (strain DS-1 / DSM 13023 / NCIMB 13966) protein is Dual-specificity RNA methyltransferase RlmN.